The chain runs to 287 residues: tRNA uridine(34) hydroxylase (287 aa).

The Rhodanese domain maps to 132–226 (EGRPVVMLDT…YFEEVGGAHY (95 aa)). C186 serves as the catalytic Cysteine persulfide intermediate.

This sequence belongs to the TrhO family.

The enzyme catalyses uridine(34) in tRNA + AH2 + O2 = 5-hydroxyuridine(34) in tRNA + A + H2O. Functionally, catalyzes oxygen-dependent 5-hydroxyuridine (ho5U) modification at position 34 in tRNAs. This Paraburkholderia xenovorans (strain LB400) protein is tRNA uridine(34) hydroxylase.